The sequence spans 484 residues: Protein nucleotidyltransferase YdiU (484 aa).

The ATP site is built by glycine 81, glycine 83, arginine 84, lysine 103, aspartate 115, glycine 116, arginine 166, and arginine 173. Aspartate 244 (proton acceptor) is an active-site residue. Mg(2+) is bound by residues asparagine 245 and aspartate 254. Aspartate 254 is a binding site for ATP.

This sequence belongs to the SELO family. The cofactor is Mg(2+). It depends on Mn(2+) as a cofactor.

It catalyses the reaction L-seryl-[protein] + ATP = 3-O-(5'-adenylyl)-L-seryl-[protein] + diphosphate. The enzyme catalyses L-threonyl-[protein] + ATP = 3-O-(5'-adenylyl)-L-threonyl-[protein] + diphosphate. It carries out the reaction L-tyrosyl-[protein] + ATP = O-(5'-adenylyl)-L-tyrosyl-[protein] + diphosphate. The catalysed reaction is L-histidyl-[protein] + UTP = N(tele)-(5'-uridylyl)-L-histidyl-[protein] + diphosphate. It catalyses the reaction L-seryl-[protein] + UTP = O-(5'-uridylyl)-L-seryl-[protein] + diphosphate. The enzyme catalyses L-tyrosyl-[protein] + UTP = O-(5'-uridylyl)-L-tyrosyl-[protein] + diphosphate. Functionally, nucleotidyltransferase involved in the post-translational modification of proteins. It can catalyze the addition of adenosine monophosphate (AMP) or uridine monophosphate (UMP) to a protein, resulting in modifications known as AMPylation and UMPylation. The polypeptide is Protein nucleotidyltransferase YdiU (Shewanella baltica (strain OS195)).